The following is a 362-amino-acid chain: 4-hydroxytryptamine kinase (362 aa).

ATP contacts are provided by residues Asn37, Lys57, and 118–120; that span reads QDV. Asp224 is a catalytic residue. 249–251 serves as a coordination point for ATP; sequence DWE.

This sequence belongs to the methylthioribose kinase family. Monomer. The cofactor is Mg(2+).

The catalysed reaction is 4-hydroxytryptamine + ATP = norbaeocystin + ADP + H(+). It catalyses the reaction psilocin + ATP = psilocybin + ADP + H(+). It carries out the reaction 4-hydroxy-N,N,N-trimethyltryptamine + ATP = aeruginascin + ADP + H(+). Its pathway is secondary metabolite biosynthesis. Its function is as follows. 4-hydroxytryptamine kinase; part of the gene cluster that mediates the biosynthesis of psilocybin, a psychotropic tryptamine-derived natural product. The first step in the pathway is the decarboxylation of L-tryptophan to tryptamine by the decarboxylase psiD. 4-hydroxy-L-tryptophan is accepted as substrate by psiD as well. The cytochrome P450 monooxygenase psiH then converts tryptamine to 4-hydroxytryptamine. The kinase psiK catalyzes the 4-O-phosphorylation step by converting 4-hydroxytryptamine into norbaeocystin. The methyltransferase psiM then catalyzes iterative methyl transfer to the amino group of norbaeocystin to yield psilocybin via a monomethylated intermediate, baeocystin. 4-hydroxy-6-methyl-l-tryptophancan also be converted the decarboxylase PsiD, kinase PsiK, and methyltransferase PsiM into respectively 6-methyl-norbaeocystin, 6-methylbaeocystin, and 6-methylpsilocybin. PsiK kinase can also turn psilocin into psilocybin. This activity may represent a protective mechanism to rephosphorylate the unstable psilocin to the stable psilocybin in case of intracellular ester cleavage. Moreover, psiK is able to O-phosphorylate the quaternary amine 4-hydroxy-N,N,N-trimethyltryptamine (4-OH-TMT) to yield aeruginascin, another bioactive compound found in Psilocybe species. In Psilocybe cubensis (Psychedelic mushroom), this protein is 4-hydroxytryptamine kinase.